We begin with the raw amino-acid sequence, 1341 residues long: DNA-directed RNA polymerase subunit Rpo1N (1341 aa).

Zn(2+)-binding residues include Cys-62, Cys-65, Cys-72, His-75, Cys-102, Cys-105, Cys-149, and Cys-152. The Mg(2+) site is built by Asp-918, Asp-920, and Asp-922.

It belongs to the RNA polymerase beta' chain family. Part of the RNA polymerase complex. It depends on Mg(2+) as a cofactor. Requires Zn(2+) as cofactor. Post-translationally, this protein undergoes a protein self splicing that involves a post-translational excision of the intervening region (intein) followed by peptide ligation.

Its subcellular location is the cytoplasm. It catalyses the reaction RNA(n) + a ribonucleoside 5'-triphosphate = RNA(n+1) + diphosphate. Functionally, DNA-dependent RNA polymerase (RNAP) catalyzes the transcription of DNA into RNA using the four ribonucleoside triphosphates as substrates. Forms the clamp head domain. The sequence is that of DNA-directed RNA polymerase subunit Rpo1N from Methanocaldococcus jannaschii (strain ATCC 43067 / DSM 2661 / JAL-1 / JCM 10045 / NBRC 100440) (Methanococcus jannaschii).